The following is a 153-amino-acid chain: Pheromone-binding protein Gp-9 (153 aa).

The signal sequence occupies residues 1–19; it reads MKTFVLHIFIFALVAFASA. 3 disulfides stabilise this stretch: Cys37–Cys77, Cys73–Cys129, and Cys118–Cys138.

Belongs to the PBP/GOBP family. Homodimer.

The protein localises to the secreted. Its function is as follows. Colony queen number, a major feature of social organization, is associated with worker genotype for Gp-9. Colonies are headed by either a single reproductive queen (monogyne form) or multiple queens (polygyne form). Differences in worker Gp-9 genotypes between social forms may cause differences in workers' abilities to recognize queens and regulate their numbers. The sequence is that of Pheromone-binding protein Gp-9 from Solenopsis sp. (strain B0-153) (Fire ant).